We begin with the raw amino-acid sequence, 494 residues long: Ankyrin repeat domain-containing protein 33B (494 aa).

The segment at 1-80 (MVLLAGTGPE…SAESVPEGVP (80 aa)) is disordered. Acidic residues predominate over residues 30 to 42 (VEEDPADYEEFED). ANK repeat units lie at residues 84–113 (PETA…SVEE), 120–150 (NGRT…DVNW), 154–183 (EGNT…GLDL), 189–218 (FGFT…DVHA), and 223–255 (RGMS…PEQF). A disordered region spans residues 349-494 (RAARGPQAQE…RRTAPWKKRT (146 aa)). Over residues 371 to 382 (TGQEDADSREGS) the composition is skewed to basic and acidic residues. The residue at position 405 (Ser405) is a Phosphoserine. Composition is skewed to basic and acidic residues over residues 440 to 451 (RPARKGSTKDSG) and 459 to 487 (RYKE…ERRT). Residues 459-488 (RYKEAKEEKRKAEEAEKKRQAEAQKERRTA) adopt a coiled-coil conformation.

This chain is Ankyrin repeat domain-containing protein 33B (ANKRD33B), found in Homo sapiens (Human).